Here is a 223-residue protein sequence, read N- to C-terminus: Putative C-type lectin protein 51 (223 aa).

A signal peptide spans Met-1–Cys-31. In terms of domain architecture, C-type lectin spans Gln-111–Gly-218. Cys-193 and Cys-209 are oxidised to a cystine.

This chain is Putative C-type lectin protein 51 (51), found in Equine herpesvirus 2 (strain 86/87) (EHV-2).